The primary structure comprises 96 residues: Small cysteine and glycine repeat-containing protein 7 (96 aa).

The interval 4–80 is 14 X 2 AA repeats of CG; the sequence is CGCGSCGGCG…TCGSCGCGCG (77 aa).

Belongs to the KRTAP type 28 family.

Functionally, in the hair cortex, hair keratin intermediate filaments are embedded in an interfilamentous matrix, consisting of hair keratin-associated proteins (KRTAP), which are essential for the formation of a rigid and resistant hair shaft through their extensive disulfide bond cross-linking with abundant cysteine residues of hair keratins. The matrix proteins include the high-sulfur and high-glycine-tyrosine keratins. This is Small cysteine and glycine repeat-containing protein 7 from Homo sapiens (Human).